The primary structure comprises 267 residues: MTNQTIKVVIAGARGRMGIEAVKLAEETSHFELVAALDHAHEGKKLSDVIHTTSEAPIYTDIDVCLSETAPDVLIDLTTPEIGKVHTKKALEHGVRPVVGTTGFSEADLKELQQLTEEKGIGCIIAPNFAVGAVLMMKFAKMAANYFPDVEIIELHHDKKLDAPSGTGLKTAEMIAEVRESKKQGHPDEKELIEGARGADYDGIRLHSVRLPGMIAHQEVLFGMDGQTLTIRHDSYNRASFMSGVKLSVEQVMHIDQLVYGLENIID.

NAD(+) contacts are provided by residues 12–17 (GARGRM), aspartate 38, 100–102 (GTT), and 126–129 (APNF). Histidine 156 functions as the Proton donor/acceptor in the catalytic mechanism. A (S)-2,3,4,5-tetrahydrodipicolinate-binding site is contributed by histidine 157. Lysine 160 serves as the catalytic Proton donor. 166–167 (GT) provides a ligand contact to (S)-2,3,4,5-tetrahydrodipicolinate.

Belongs to the DapB family.

It is found in the cytoplasm. The catalysed reaction is (S)-2,3,4,5-tetrahydrodipicolinate + NAD(+) + H2O = (2S,4S)-4-hydroxy-2,3,4,5-tetrahydrodipicolinate + NADH + H(+). It catalyses the reaction (S)-2,3,4,5-tetrahydrodipicolinate + NADP(+) + H2O = (2S,4S)-4-hydroxy-2,3,4,5-tetrahydrodipicolinate + NADPH + H(+). It participates in amino-acid biosynthesis; L-lysine biosynthesis via DAP pathway; (S)-tetrahydrodipicolinate from L-aspartate: step 4/4. Its function is as follows. Catalyzes the conversion of 4-hydroxy-tetrahydrodipicolinate (HTPA) to tetrahydrodipicolinate. This chain is 4-hydroxy-tetrahydrodipicolinate reductase, found in Bacillus pumilus (strain SAFR-032).